The following is a 134-amino-acid chain: Profilin (134 aa).

The protein belongs to the profilin family. Interacts with host Tpm1. Interacts with protein A25.

It localises to the host cytoplasm. In terms of biological role, participates in either intracellular transport of viral proteins or intercellular spread of the virus. Cellular profilins modulate actin filament dynamics (polymerization and depolymerization) via direct binding to actin through an actin-binding domain as well as by modulation of other actin-binding proteins. In contrast to cellular homologs, the poxvirus profilins seem to bind actin only weakly. This Ectromelia virus (strain Moscow) (ECTV) protein is Profilin.